A 947-amino-acid chain; its full sequence is Bromodomain testis-specific protein (947 aa).

The region spanning 27-133 (RLTNQLQYLQ…KLFMQKLSQM (107 aa)) is the Bromo 1 domain. Asn-109 is a binding site for JQ1. Position 187 is a phosphoserine (Ser-187). The segment at 202–228 (QTAAQVTKGVKRKADTTTPATSAVKAS) is disordered. A Nuclear localization signal motif is present at residues 209–220 (KGVKRKADTTTP). The span at 217–228 (TTTPATSAVKAS) shows a compositional bias: polar residues. The Bromo 2 domain maps to 267 to 376 (VKVTEQLRHC…DVFETHFSKI (110 aa)). Disordered stretches follow at residues 395–420 (ETTGRENTNEASSEGNSSDDSEDERV), 444–511 (PFRK…KPMN), 610–698 (NNQL…IPPE), and 882–924 (NKCS…RRRE). Residues 417–470 (DERVKRLAKLQEQLKAVHQQLQVLSQVPFRKLNKKKEKSKKEKKKEKVNNSNEN) adopt a coiled-coil conformation. Over residues 447–462 (KLNKKKEKSKKEKKKE) the composition is skewed to basic residues. Over residues 470–481 (NPRKMCEQMRLK) the composition is skewed to basic and acidic residues. The span at 482 to 494 (EKSKRNQPKKRKQ) shows a compositional bias: basic residues. The 83-residue stretch at 500–582 (KSEDEDNAKP…ACLRKRPLKP (83 aa)) folds into the NET domain. The stretch at 591–621 (KEELHSQKKQELEKRLLDVNNQLNSRKRQTK) forms a coiled coil. Low complexity predominate over residues 637–662 (LSESSSSSSSSSESESSSSDLSSSDS). Basic and acidic residues-rich tracts occupy residues 674 to 692 (TEVKPNDSPSKENVKKMKN) and 885 to 924 (SGEEQKEHQQSSEAQDKSKLWLLKDRDLARQKEQERRRRE).

It belongs to the BET family. Interacts with mRNA splicing machinery proteins SRSF2, DDX5, HNRNPK and TARDBP. Interacts with the acetylated N-terminus of histone H1, H2, H3 and H4. Interacts with P-TEFb components CDK9 and CCNT1/cyclin-T1. Interacts with SMARCE1. Interacts with the acetylated N-terminus of histone H1.4, H2A, H2B, H3 and H4. Post-translationally, ubiquitinated in a SPOP-dependent manner, leading to proteasomal degradation. As to expression, testis-specific. A 3-fold higher expression is seen in adult testis than in embryo testis. Expression seems to be correlated with histone H4 hyperacetylation during the haploid phase of spermatogenesis (spermiogenesis). No expression, or very low expression is seen in patients' testes with abnormal spermatogenesis. Expressed in cancers such as non-small cell lung cancer and squamous cell carcinomas of the head and neck as well as of esophagus, but not in melanoma or in cancers of the colon, breast, kidney and bladder.

It localises to the nucleus. Functionally, testis-specific chromatin protein that specifically binds histone H4 acetylated at 'Lys-5' and 'Lys-8' (H4K5ac and H4K8ac, respectively) and plays a key role in spermatogenesis. Required in late pachytene spermatocytes: plays a role in meiotic and post-meiotic cells by binding to acetylated histones at the promoter of specific meiotic and post-meiotic genes, facilitating their activation at the appropriate time. In the post-meiotic phase of spermatogenesis, binds to hyperacetylated histones and participates in their general removal from DNA. Also recognizes and binds a subset of butyrylated histones: able to bind histone H4 butyrylated at 'Lys-8' (H4K8ac), while it is not able to bind H4 butyrylated at 'Lys-5' (H4K5ac). Also acts as a component of the splicing machinery in pachytene spermatocytes and round spermatids and participates in 3'-UTR truncation of specific mRNAs in post-meiotic spermatids. Required for chromocenter organization, a structure comprised of peri-centromeric heterochromatin. The chain is Bromodomain testis-specific protein (BRDT) from Homo sapiens (Human).